Consider the following 1442-residue polypeptide: Trafficking protein particle complex subunit 10 (1442 aa).

Over residues 1-23 (MSNVSPNSMNLNGSTSSTASVND) the composition is skewed to polar residues. Disordered stretches follow at residues 1–86 (MSNV…SSSS), 251–277 (TSSGNNKDKDNDNGGGSSGTGLSTSTK), 535–564 (GSSSSNTPSSTSATTAANGKNTPMPSNSGI), 1208–1238 (LSSSTSPSSATDSSNSNGNNNNNNNNNNHSK), 1316–1335 (QQQQKESNNDNGNEKQQKQQ), and 1422–1442 (LQDNNNNNNNSINSQTSTNKT). A compositionally biased stretch (low complexity) spans 39-86 (SSSSASSISNSNSSSSNNLKPSTQPLSSSSTLNTPTQFSLQHSSSSSS). Low complexity predominate over residues 535–553 (GSSSSNTPSSTSATTAANG). The segment covering 554 to 564 (KNTPMPSNSGI) has biased composition (polar residues). The span at 1208 to 1236 (LSSSTSPSSATDSSNSNGNNNNNNNNNNH) shows a compositional bias: low complexity. The segment covering 1425–1442 (NNNNNNNSINSQTSTNKT) has biased composition (low complexity).

This sequence belongs to the TMEM1 family. In terms of assembly, part of the multisubunit TRAPP (transport protein particle) complex.

The protein localises to the golgi apparatus. The protein resides in the cis-Golgi network. May play a role in vesicular transport from endoplasmic reticulum to Golgi. This Dictyostelium discoideum (Social amoeba) protein is Trafficking protein particle complex subunit 10 (trapcc10-1).